Here is a 474-residue protein sequence, read N- to C-terminus: Aspartyl/glutamyl-tRNA(Asn/Gln) amidotransferase subunit B (474 aa).

The protein belongs to the GatB/GatE family. GatB subfamily. As to quaternary structure, heterotrimer of A, B and C subunits.

It carries out the reaction L-glutamyl-tRNA(Gln) + L-glutamine + ATP + H2O = L-glutaminyl-tRNA(Gln) + L-glutamate + ADP + phosphate + H(+). The catalysed reaction is L-aspartyl-tRNA(Asn) + L-glutamine + ATP + H2O = L-asparaginyl-tRNA(Asn) + L-glutamate + ADP + phosphate + 2 H(+). Allows the formation of correctly charged Asn-tRNA(Asn) or Gln-tRNA(Gln) through the transamidation of misacylated Asp-tRNA(Asn) or Glu-tRNA(Gln) in organisms which lack either or both of asparaginyl-tRNA or glutaminyl-tRNA synthetases. The reaction takes place in the presence of glutamine and ATP through an activated phospho-Asp-tRNA(Asn) or phospho-Glu-tRNA(Gln). The polypeptide is Aspartyl/glutamyl-tRNA(Asn/Gln) amidotransferase subunit B (Lactiplantibacillus plantarum (strain ATCC BAA-793 / NCIMB 8826 / WCFS1) (Lactobacillus plantarum)).